The primary structure comprises 757 residues: 5-methyltetrahydropteroyltriglutamate--homocysteine methyltransferase (757 aa).

5-methyltetrahydropteroyltri-L-glutamate is bound by residues 17–20 (RELK) and K117. L-homocysteine contacts are provided by residues 434-436 (IGS) and E487. L-methionine contacts are provided by residues 434-436 (IGS) and E487. Residues 518-519 (RC) and W564 each bind 5-methyltetrahydropteroyltri-L-glutamate. D602 lines the L-homocysteine pocket. An L-methionine-binding site is contributed by D602. E608 lines the 5-methyltetrahydropteroyltri-L-glutamate pocket. Zn(2+)-binding residues include H644, C646, and E668. H697 functions as the Proton donor in the catalytic mechanism. C729 provides a ligand contact to Zn(2+).

The protein belongs to the vitamin-B12 independent methionine synthase family. Zn(2+) serves as cofactor.

It carries out the reaction 5-methyltetrahydropteroyltri-L-glutamate + L-homocysteine = tetrahydropteroyltri-L-glutamate + L-methionine. It functions in the pathway amino-acid biosynthesis; L-methionine biosynthesis via de novo pathway; L-methionine from L-homocysteine (MetE route): step 1/1. Functionally, catalyzes the transfer of a methyl group from 5-methyltetrahydrofolate to homocysteine resulting in methionine formation. The chain is 5-methyltetrahydropteroyltriglutamate--homocysteine methyltransferase from Proteus mirabilis (strain HI4320).